The sequence spans 461 residues: Cysteine--tRNA ligase (461 aa).

Cys-28 contributes to the Zn(2+) binding site. The short motif at 30–40 (ITIYDLCHIGH) is the 'HIGH' region element. Zn(2+) is bound by residues Cys-209, His-234, and Glu-238. The 'KMSKS' region signature appears at 266–270 (KMSKS). Residue Lys-269 coordinates ATP.

This sequence belongs to the class-I aminoacyl-tRNA synthetase family. In terms of assembly, monomer. Zn(2+) is required as a cofactor.

The protein resides in the cytoplasm. The enzyme catalyses tRNA(Cys) + L-cysteine + ATP = L-cysteinyl-tRNA(Cys) + AMP + diphosphate. In Yersinia pestis bv. Antiqua (strain Antiqua), this protein is Cysteine--tRNA ligase.